The chain runs to 281 residues: 18S rRNA (guanine-N(7))-methyltransferase (281 aa).

Residues 256–281 are disordered; sequence KARRRRQGKEVCPDTQYTGRKRKPRF.

This sequence belongs to the class I-like SAM-binding methyltransferase superfamily. BUD23/WBSCR22 family. Heterodimer with TRMT112; this heterodimerization is necessary for the metabolic stability and activity of the catalytic subunit BUD23. Interacts with GRIP1. May be ubiquitinated and targeted to degradation in response to pro-inflammatory cytokine signaling.

It localises to the nucleus. It is found in the nucleoplasm. The protein localises to the cytoplasm. The protein resides in the perinuclear region. It catalyses the reaction a guanosine in 18S rRNA + S-adenosyl-L-methionine = an N(7)-methylguanosine in 18S rRNA + S-adenosyl-L-homocysteine. Its function is as follows. S-adenosyl-L-methionine-dependent methyltransferase that specifically methylates the N(7) position of a guanine in 18S rRNA. Requires the methyltransferase adapter protein TRM112 for full rRNA methyltransferase activity. Involved in the pre-rRNA processing steps leading to small-subunit rRNA production independently of its RNA-modifying catalytic activity. Important for biogenesis end export of the 40S ribosomal subunit independent on its methyltransferase activity. Locus-specific steroid receptor coactivator. Potentiates transactivation by glucocorticoid (NR3C1), mineralocorticoid (NR3C2), androgen (AR) and progesterone (PGR) receptors. Required for the maintenance of open chromatin at the TSC22D3/GILZ locus to facilitate NR3C1 loading on the response elements. Required for maintenance of dimethylation on histone H3 'Lys-79' (H3K79me2), although direct histone methyltransferase activity is not observed in vitro. This Bos taurus (Bovine) protein is 18S rRNA (guanine-N(7))-methyltransferase.